Here is a 212-residue protein sequence, read N- to C-terminus: ATP-dependent Clp protease proteolytic subunit (212 aa).

The active-site Nucleophile is Ser-106. The active site involves His-131.

This sequence belongs to the peptidase S14 family. As to quaternary structure, fourteen ClpP subunits assemble into 2 heptameric rings which stack back to back to give a disk-like structure with a central cavity, resembling the structure of eukaryotic proteasomes.

The protein resides in the cytoplasm. The catalysed reaction is Hydrolysis of proteins to small peptides in the presence of ATP and magnesium. alpha-casein is the usual test substrate. In the absence of ATP, only oligopeptides shorter than five residues are hydrolyzed (such as succinyl-Leu-Tyr-|-NHMec, and Leu-Tyr-Leu-|-Tyr-Trp, in which cleavage of the -Tyr-|-Leu- and -Tyr-|-Trp bonds also occurs).. Cleaves peptides in various proteins in a process that requires ATP hydrolysis. Has a chymotrypsin-like activity. Plays a major role in the degradation of misfolded proteins. This chain is ATP-dependent Clp protease proteolytic subunit, found in Rhodopseudomonas palustris (strain ATCC BAA-98 / CGA009).